Consider the following 614-residue polypeptide: Baeyer-Villiger monooxygenase peniC (614 aa).

FAD-binding positions include glutamate 99, 107 to 110 (TWHW), aspartate 119, and tyrosine 125. Residues 255–261 (TGASGVQ), 278–279 (RT), and 398–399 (KR) each bind NADP(+).

This sequence belongs to the FAD-binding monooxygenase family. Requires FAD as cofactor.

It catalyses the reaction gamma-lactone-2-keto[5.5.5.5]fenestrane + NADPH + O2 + H(+) = penifulvin A + NADP(+) + H2O. It participates in secondary metabolite biosynthesis; terpenoid biosynthesis. Functionally, baeyer-Villiger monooxygenase; part of the gene cluster that mediates the biosynthesis of penifulvin A, a potent insecticidal sesquiterpene that features a [5.5.5.6]dioxafenestrane ring. Within the pathway, peniC is responsible for the final regioselective Baeyer-Villiger oxidation of gamma-lactone-2-keto[5.5.5.5]fenestran between C1 and C2 to form the delta-lactone moiety of penifulvin A. The first step of the pathway is performed by the sesquiterpene cyclase peniA that generates the angular triquinane scaffold silphinene via cyclization of the linear farnesyl pyrophosphate (FPP). The cytochrome P450 monooxygenase peniB and the flavin-dependent monooxygenase peniC then catalyze a series of oxidation reactions to transform silphinene into penifulvin A. This chain is Baeyer-Villiger monooxygenase peniC, found in Penicillium patulum (Penicillium griseofulvum).